The chain runs to 556 residues: 2-succinyl-5-enolpyruvyl-6-hydroxy-3-cyclohexene-1-carboxylate synthase (556 aa).

The protein belongs to the TPP enzyme family. MenD subfamily. In terms of assembly, homodimer. Mg(2+) is required as a cofactor. The cofactor is Mn(2+). It depends on thiamine diphosphate as a cofactor.

The enzyme catalyses isochorismate + 2-oxoglutarate + H(+) = 5-enolpyruvoyl-6-hydroxy-2-succinyl-cyclohex-3-ene-1-carboxylate + CO2. Its pathway is quinol/quinone metabolism; 1,4-dihydroxy-2-naphthoate biosynthesis; 1,4-dihydroxy-2-naphthoate from chorismate: step 2/7. The protein operates within quinol/quinone metabolism; menaquinone biosynthesis. Its function is as follows. Catalyzes the thiamine diphosphate-dependent decarboxylation of 2-oxoglutarate and the subsequent addition of the resulting succinic semialdehyde-thiamine pyrophosphate anion to isochorismate to yield 2-succinyl-5-enolpyruvyl-6-hydroxy-3-cyclohexene-1-carboxylate (SEPHCHC). The chain is 2-succinyl-5-enolpyruvyl-6-hydroxy-3-cyclohexene-1-carboxylate synthase from Escherichia coli O127:H6 (strain E2348/69 / EPEC).